A 246-amino-acid chain; its full sequence is Biosynthetic peptidoglycan transglycosylase (246 aa).

Residues 28–48 (FALFLVLFLSSVVLFRFVPVP) form a helical membrane-spanning segment.

This sequence belongs to the glycosyltransferase 51 family.

The protein resides in the cell inner membrane. It catalyses the reaction [GlcNAc-(1-&gt;4)-Mur2Ac(oyl-L-Ala-gamma-D-Glu-L-Lys-D-Ala-D-Ala)](n)-di-trans,octa-cis-undecaprenyl diphosphate + beta-D-GlcNAc-(1-&gt;4)-Mur2Ac(oyl-L-Ala-gamma-D-Glu-L-Lys-D-Ala-D-Ala)-di-trans,octa-cis-undecaprenyl diphosphate = [GlcNAc-(1-&gt;4)-Mur2Ac(oyl-L-Ala-gamma-D-Glu-L-Lys-D-Ala-D-Ala)](n+1)-di-trans,octa-cis-undecaprenyl diphosphate + di-trans,octa-cis-undecaprenyl diphosphate + H(+). The protein operates within cell wall biogenesis; peptidoglycan biosynthesis. Peptidoglycan polymerase that catalyzes glycan chain elongation from lipid-linked precursors. In Pasteurella multocida (strain Pm70), this protein is Biosynthetic peptidoglycan transglycosylase.